We begin with the raw amino-acid sequence, 146 residues long: VHLSGEEKACVTGLWGKVNEDEVGAEALGRLLVVYPWTQRFFDSFGDLSSASAVMGNPKVKAHGKKVLHSLGEGVANLDNLKGTFAKLSELHCDKLHVDPENFRLLGNVLVVVLASKFGKEFTPPVQAAFQKVVAGVANALAHKYH.

An N-acetylvaline modification is found at Val1. Residues 2 to 146 (HLSGEEKACV…VANALAHKYH (145 aa)) form the Globin domain. A Phosphothreonine modification is found at Thr12. Ser44 bears the Phosphoserine mark. An N6-acetyllysine modification is found at Lys59. His63 is a binding site for heme b. At Lys82 the chain carries N6-acetyllysine. His92 is a heme b binding site. At Cys93 the chain carries S-nitrosocysteine. Lys144 carries the post-translational modification N6-acetyllysine.

It belongs to the globin family. As to quaternary structure, heterotetramer of two alpha chains and two beta chains. Red blood cells.

Involved in oxygen transport from the lung to the various peripheral tissues. This chain is Hemoglobin subunit beta (HBB), found in Suncus murinus (Asian house shrew).